A 92-amino-acid polypeptide reads, in one-letter code: uncharacterized protein (92 aa).

The N-terminal stretch at 1–29 (MAAQTDYKKQVVGILLSLAFVLFVFSFSE) is a signal peptide.

This is an uncharacterized protein from Bacillus subtilis (strain 168).